Consider the following 260-residue polypeptide: Carbonic anhydrase 3 (260 aa).

Residue Ala-2 is modified to N-acetylalanine. Positions 3–259 (KEWGYADHNG…LKGRVVRASF (257 aa)) constitute an Alpha-carbonic anhydrase domain. A phosphoserine mark is found at Ser-29, Ser-43, Ser-50, and Ser-55. An involved in proton transfer region spans residues 64 to 67 (RTCR). A Phosphothreonine modification is found at Thr-73. Residues His-94, His-96, and His-119 each coordinate Zn(2+). Tyr-127 carries the phosphotyrosine modification. Phosphothreonine is present on residues Thr-129 and Thr-176. 2 positions are modified to S-glutathionyl cysteine: Cys-182 and Cys-187. 198-199 (TT) provides a ligand contact to substrate. Position 216 is a phosphothreonine (Thr-216). Ser-219 carries the phosphoserine modification.

It belongs to the alpha-carbonic anhydrase family. Zn(2+) is required as a cofactor. Post-translationally, S-thiolated both by thiol-disulfide exchange with glutathione disulfide and by oxyradical-initiated S-thiolation with reduced glutathione. S-glutathionylated in hepatocytes under oxidative stress.

The protein resides in the cytoplasm. It carries out the reaction hydrogencarbonate + H(+) = CO2 + H2O. With respect to regulation, inhibited by acetazolamide. Its function is as follows. Reversible hydration of carbon dioxide. This Equus caballus (Horse) protein is Carbonic anhydrase 3 (CA3).